A 494-amino-acid chain; its full sequence is Trigger factor (494 aa).

The region spanning 169 to 254 is the PPIase FKBP-type domain; the sequence is GDRITMDYVG…VKEVAAPADV (86 aa). Positions 441 to 494 are disordered; sequence LAEEEGEAKAETKKAAPKKKAAAKAEAADAGEGEEAAPKKKAAPKKKAADESAE.

Belongs to the FKBP-type PPIase family. Tig subfamily.

Its subcellular location is the cytoplasm. It catalyses the reaction [protein]-peptidylproline (omega=180) = [protein]-peptidylproline (omega=0). Involved in protein export. Acts as a chaperone by maintaining the newly synthesized protein in an open conformation. Functions as a peptidyl-prolyl cis-trans isomerase. The polypeptide is Trigger factor (Rhizobium johnstonii (strain DSM 114642 / LMG 32736 / 3841) (Rhizobium leguminosarum bv. viciae)).